A 506-amino-acid chain; its full sequence is Catalase (506 aa).

Residues histidine 73 and asparagine 146 contribute to the active site. Heme is bound at residue tyrosine 356. Positions 504–506 (SKF) match the Microbody targeting signal motif.

It belongs to the catalase family. Homotetramer. The cofactor is heme.

It is found in the peroxisome matrix. It catalyses the reaction 2 H2O2 = O2 + 2 H2O. Its function is as follows. Catalyzes the degradation of hydrogen peroxide (H(2)O(2)) generated by peroxisomal oxidases to water and oxygen, thereby protecting cells from the toxic effects of hydrogen peroxide. This Drosophila melanogaster (Fruit fly) protein is Catalase (Cat).